The chain runs to 64 residues: Large ribosomal subunit protein uL29 (64 aa).

Belongs to the universal ribosomal protein uL29 family.

The chain is Large ribosomal subunit protein uL29 (rpl29) from Methanothermobacter thermautotrophicus (strain ATCC 29096 / DSM 1053 / JCM 10044 / NBRC 100330 / Delta H) (Methanobacterium thermoautotrophicum).